The sequence spans 265 residues: Phosphatidylserine decarboxylase proenzyme (265 aa).

Residue Ser183 is the Schiff-base intermediate with substrate; via pyruvic acid of the active site. Ser183 is subject to Pyruvic acid (Ser); by autocatalysis. The segment at 218–242 is disordered; it reads PQIESEPESEPALQTAPVETAANPS.

The protein belongs to the phosphatidylserine decarboxylase family. PSD-A subfamily. Heterodimer of a large membrane-associated beta subunit and a small pyruvoyl-containing alpha subunit. Pyruvate is required as a cofactor. Is synthesized initially as an inactive proenzyme. Formation of the active enzyme involves a self-maturation process in which the active site pyruvoyl group is generated from an internal serine residue via an autocatalytic post-translational modification. Two non-identical subunits are generated from the proenzyme in this reaction, and the pyruvate is formed at the N-terminus of the alpha chain, which is derived from the carboxyl end of the proenzyme. The post-translation cleavage follows an unusual pathway, termed non-hydrolytic serinolysis, in which the side chain hydroxyl group of the serine supplies its oxygen atom to form the C-terminus of the beta chain, while the remainder of the serine residue undergoes an oxidative deamination to produce ammonia and the pyruvoyl prosthetic group on the alpha chain.

The protein resides in the cell membrane. The catalysed reaction is a 1,2-diacyl-sn-glycero-3-phospho-L-serine + H(+) = a 1,2-diacyl-sn-glycero-3-phosphoethanolamine + CO2. It participates in phospholipid metabolism; phosphatidylethanolamine biosynthesis; phosphatidylethanolamine from CDP-diacylglycerol: step 2/2. Functionally, catalyzes the formation of phosphatidylethanolamine (PtdEtn) from phosphatidylserine (PtdSer). This Neisseria meningitidis serogroup C (strain 053442) protein is Phosphatidylserine decarboxylase proenzyme.